The following is a 130-amino-acid chain: Cholecystokinin (130 aa).

The signal sequence occupies residues 1–20; the sequence is MYGGICICVLLAALSVSSLG. A propeptide spanning residues 21–48 is cleaved from the precursor; sequence QQPAGSHDGSPVAAELQQSLTEPHRHSR. The disordered stretch occupies residues 21–63; the sequence is QQPAGSHDGSPVAAELQQSLTEPHRHSRAPSSAGPLKPAPRLD. Sulfotyrosine is present on Y112. F118 bears the Phenylalanine amide mark. A propeptide spanning residues 122 to 130 is cleaved from the precursor; the sequence is SAEEYEYSS. 2 positions are modified to sulfotyrosine: Y126 and Y128.

Belongs to the gastrin/cholecystokinin family. Post-translationally, the precursor is cleaved by proteases to produce a number of active cholecystokinins. As to expression, in the small intestine, the major production site is around the vitelline diverticulum.

It localises to the secreted. In terms of biological role, this peptide hormone induces gall bladder contraction and the release of pancreatic enzymes in the gut. Its function in the brain is not clear. It also decreases food intake and regulates gastrointestinal physiological processes. This is Cholecystokinin (CCK) from Gallus gallus (Chicken).